Here is a 666-residue protein sequence, read N- to C-terminus: Putative L-type lectin-domain containing receptor kinase V.1 (666 aa).

The signal sequence occupies residues 1-18 (MVLLLFLVLFFVPESVVC). Over 19 to 289 (QRPNPNGVEF…WIQSPNGILT (271 aa)) the chain is Extracellular. A legume-lectin like region spans residues 27–257 (EFNTSGNMYT…SHYILGWTFK (231 aa)). N29, N74, N123, N176, N204, and N259 each carry an N-linked (GlcNAc...) asparagine glycan. Residues 290 to 310 (ISLTVSGVIILIILSLSLWLF) form a helical membrane-spanning segment. Over 311 to 666 (LKRKKLLEVL…FTESFVSHGR (356 aa)) the chain is Cytoplasmic. One can recognise a Protein kinase domain in the interval 344 to 625 (FKDTEVLGKG…SVAQLPHNLL (282 aa)). ATP contacts are provided by residues 350 to 358 (LGKGGFGKV) and K373. The active-site Proton acceptor is D469.

It in the C-terminal section; belongs to the protein kinase superfamily. Ser/Thr protein kinase family. In the N-terminal section; belongs to the leguminous lectin family.

It is found in the cell membrane. It catalyses the reaction L-seryl-[protein] + ATP = O-phospho-L-seryl-[protein] + ADP + H(+). It carries out the reaction L-threonyl-[protein] + ATP = O-phospho-L-threonyl-[protein] + ADP + H(+). The polypeptide is Putative L-type lectin-domain containing receptor kinase V.1 (LECRK51) (Arabidopsis thaliana (Mouse-ear cress)).